The following is a 304-amino-acid chain: Sulfate adenylyltransferase subunit 2 (304 aa).

It belongs to the PAPS reductase family. CysD subfamily. Heterodimer composed of CysD, the smaller subunit, and CysN.

The catalysed reaction is sulfate + ATP + H(+) = adenosine 5'-phosphosulfate + diphosphate. The protein operates within sulfur metabolism; hydrogen sulfide biosynthesis; sulfite from sulfate: step 1/3. Its function is as follows. With CysN forms the ATP sulfurylase (ATPS) that catalyzes the adenylation of sulfate producing adenosine 5'-phosphosulfate (APS) and diphosphate, the first enzymatic step in sulfur assimilation pathway. APS synthesis involves the formation of a high-energy phosphoric-sulfuric acid anhydride bond driven by GTP hydrolysis by CysN coupled to ATP hydrolysis by CysD. The sequence is that of Sulfate adenylyltransferase subunit 2 from Halorhodospira halophila (strain DSM 244 / SL1) (Ectothiorhodospira halophila (strain DSM 244 / SL1)).